A 1123-amino-acid chain; its full sequence is Telomerase reverse transcriptase (1123 aa).

The tract at residues Met-1–Ser-230 is RNA-interacting domain 1. A GQ motif region spans residues Val-58 to Leu-197. A required for regulating specificity for telomeric DNA and for processivity for primer elongation region spans residues Trp-137 to Leu-141. The tract at residues Ala-202 to Glu-311 is disordered. The Bipartite nuclear localization signal motif lies at Arg-222 to Arg-240. Phosphoserine; by PKB/AKT1 is present on Ser-227. A linker region spans residues Gly-231 to Ala-308. Positions Pro-260–Ser-279 are enriched in low complexity. The tract at residues His-309 to Gly-539 is RNA-interacting domain 2. Positions Thr-312 to Tyr-317 match the TFLY; involved in RNA binding motif. The segment at Ala-360 to His-510 is QFP motif. Positions Leu-381–Ala-401 are CP motif. A Phosphoserine; by DYRK2 modification is found at Ser-446. Positions Glu-595–Leu-926 constitute a Reverse transcriptase domain. At Tyr-697 the chain carries Phosphotyrosine; by SRC-type Tyr-kinases. Residues Asp-702, Asp-859, and Asp-860 each coordinate Mg(2+). Positions Leu-905–Phe-919 are required for oligomerization. Positions Trp-921–Leu-925 are primer grip sequence. The interval Asp-927–Asp-1123 is CTE.

It belongs to the reverse transcriptase family. Telomerase subfamily. As to quaternary structure, catalytic component of the telomerase holoenzyme complex composed of one molecule of TERT, one molecule of WRAP53/TCAB1, two molecules of H/ACA ribonucleoprotein complex subunits DKC1, NOP10, NHP2 and GAR1, and a telomerase RNA template component (TERC). The telomerase holoenzyme complex is associated with TEP1, SMG6/EST1A and POT1. The molecular chaperone HSP90/P23 complex is required for correct assembly and stabilization of the active telomerase. Interacts directly with HSP90A and PTGES3. Interacts with HSPA1A; the interaction occurs in the absence of TERC and dissociates once the complex has formed. Interacts with RAN; the interaction promotes nuclear export of TERT. Interacts with XPO1. Interacts with PTPN11; the interaction retains TERT in the nucleus. Interacts with NCL (via RRM1 and C-terminal RRM4/Arg/Gly-rich domains); the interaction is important for nucleolar localization of TERT. Interacts with SMARCA4 (via the bromodomain); the interaction regulates Wnt-mediated signaling. Interacts with MCRS1 (isoform MCRS2); the interaction inhibits in vitro telomerase activity. Interacts with PIF1; the interaction has no effect on the elongation activity of TERT. Interacts with PML; the interaction recruits TERT to PML bodies and inhibits telomerase activity. Interacts with GNL3L. Interacts with isoform 1 and isoform 2 of NVL. Interacts with DHX36. Interacts with ATF7. Phosphorylation at Tyr-697 under oxidative stress leads to translocation of TERT to the cytoplasm and reduces its antiapoptotic activity. Dephosphorylated by SHP2/PTPN11 leading to nuclear retention. Phosphorylation at Ser-227 by the AKT pathway promotes nuclear location. Phosphorylation at the G2/M phase at Ser-446 by DYRK2 promotes ubiquitination by the EDVP complex and degradation. Post-translationally, ubiquitinated by the EDVP complex, a E3 ligase complex following phosphorylation at Ser-446 by DYRK2. Ubiquitinated leads to proteasomal degradation.

It is found in the nucleus. The protein resides in the nucleolus. It localises to the nucleoplasm. The protein localises to the chromosome. Its subcellular location is the telomere. It is found in the cytoplasm. The protein resides in the PML body. It catalyses the reaction DNA(n) + a 2'-deoxyribonucleoside 5'-triphosphate = DNA(n+1) + diphosphate. Functionally, telomerase is a ribonucleoprotein enzyme essential for the replication of chromosome termini in most eukaryotes. Active in progenitor and cancer cells. Inactive, or very low activity, in normal somatic cells. Catalytic component of the teleromerase holoenzyme complex whose main activity is the elongation of telomeres by acting as a reverse transcriptase that adds simple sequence repeats to chromosome ends by copying a template sequence within the RNA component of the enzyme. Catalyzes the RNA-dependent extension of 3'-chromosomal termini with the 6-nucleotide telomeric repeat unit, 5'-TTAGGG-3'. The catalytic cycle involves primer binding, primer extension and release of product once the template boundary has been reached or nascent product translocation followed by further extension. More active on substrates containing 2 or 3 telomeric repeats. Telomerase activity is regulated by a number of factors including telomerase complex-associated proteins, chaperones and polypeptide modifiers. Modulates Wnt signaling. Plays important roles in aging and antiapoptosis. This is Telomerase reverse transcriptase (TERT) from Canis lupus familiaris (Dog).